The chain runs to 263 residues: Tryptophan 2,3-dioxygenase (263 aa).

Substrate contacts are provided by residues 32–36, Tyr94, and Arg98; that span reads FIVIH. Heme is bound at residue His221. Substrate is bound at residue Thr235.

It belongs to the tryptophan 2,3-dioxygenase family. Homotetramer. Requires heme as cofactor.

It catalyses the reaction L-tryptophan + O2 = N-formyl-L-kynurenine. It participates in amino-acid degradation; L-tryptophan degradation via kynurenine pathway; L-kynurenine from L-tryptophan: step 1/2. Heme-dependent dioxygenase that catalyzes the oxidative cleavage of the L-tryptophan (L-Trp) pyrrole ring and converts L-tryptophan to N-formyl-L-kynurenine. Catalyzes the oxidative cleavage of the indole moiety. The protein is Tryptophan 2,3-dioxygenase of Caulobacter vibrioides (strain ATCC 19089 / CIP 103742 / CB 15) (Caulobacter crescentus).